The following is a 220-amino-acid chain: Ribosomal RNA small subunit methyltransferase G (220 aa).

S-adenosyl-L-methionine-binding positions include Gly78, Phe83, Gly129–Glu130, and Arg146.

It belongs to the methyltransferase superfamily. RNA methyltransferase RsmG family.

It is found in the cytoplasm. It catalyses the reaction guanosine(527) in 16S rRNA + S-adenosyl-L-methionine = N(7)-methylguanosine(527) in 16S rRNA + S-adenosyl-L-homocysteine. Specifically methylates the N7 position of guanine in position 527 of 16S rRNA. The polypeptide is Ribosomal RNA small subunit methyltransferase G (Geobacter metallireducens (strain ATCC 53774 / DSM 7210 / GS-15)).